A 397-amino-acid polypeptide reads, in one-letter code: Bifunctional enzyme IspD/IspF (397 aa).

Positions 1 to 236 (MSIAAIILAA…LKGMQIFPDI (236 aa)) are 2-C-methyl-D-erythritol 4-phosphate cytidylyltransferase. The interval 237–397 (RTGNGYDVHS…TVIYPGEIPK (161 aa)) is 2-C-methyl-D-erythritol 2,4-cyclodiphosphate synthase. Positions 243 and 245 each coordinate a divalent metal cation. 4-CDP-2-C-methyl-D-erythritol 2-phosphate contacts are provided by residues 243-245 (DVH) and 269-270 (HS). Histidine 277 provides a ligand contact to a divalent metal cation. Residues 291 to 293 (DIG), 367 to 370 (TTNE), phenylalanine 374, and arginine 377 contribute to the 4-CDP-2-C-methyl-D-erythritol 2-phosphate site.

This sequence in the N-terminal section; belongs to the IspD/TarI cytidylyltransferase family. IspD subfamily. In the C-terminal section; belongs to the IspF family. The cofactor is a divalent metal cation.

It catalyses the reaction 2-C-methyl-D-erythritol 4-phosphate + CTP + H(+) = 4-CDP-2-C-methyl-D-erythritol + diphosphate. The enzyme catalyses 4-CDP-2-C-methyl-D-erythritol 2-phosphate = 2-C-methyl-D-erythritol 2,4-cyclic diphosphate + CMP. It functions in the pathway isoprenoid biosynthesis; isopentenyl diphosphate biosynthesis via DXP pathway; isopentenyl diphosphate from 1-deoxy-D-xylulose 5-phosphate: step 2/6. Its pathway is isoprenoid biosynthesis; isopentenyl diphosphate biosynthesis via DXP pathway; isopentenyl diphosphate from 1-deoxy-D-xylulose 5-phosphate: step 4/6. In terms of biological role, bifunctional enzyme that catalyzes the formation of 4-diphosphocytidyl-2-C-methyl-D-erythritol from CTP and 2-C-methyl-D-erythritol 4-phosphate (MEP) (IspD), and catalyzes the conversion of 4-diphosphocytidyl-2-C-methyl-D-erythritol 2-phosphate (CDP-ME2P) to 2-C-methyl-D-erythritol 2,4-cyclodiphosphate (ME-CPP) with a corresponding release of cytidine 5-monophosphate (CMP) (IspF). This chain is Bifunctional enzyme IspD/IspF, found in Bartonella bacilliformis (strain ATCC 35685 / KC583 / Herrer 020/F12,63).